We begin with the raw amino-acid sequence, 711 residues long: MPALACVDTSFVPPAYAFSDTAGDVFIPASSPTSAAVVVDRWSPSLSSSLYRIDGWGAPYFIANSSGNISVRPHGSETLPHQDIDLLKIVKKVTGPKSSGGLGLQLPLIVRFPDVLKNRLECLQSAFDYAIKSQGYDSHYQGVYPVKCNQDRFVVEDIVKFGSSFRFGLEAGSKPEILLAMSCLCKGSPDAFLVCNGFKDAEYISLALLGRKLALNTVIVLEQEEELDLVIELSQKMNVRPVIGLRAKLRTKHSGHFGSTSGEKGKFGLTTTQIVRVVRKLRQSGMLDCLQLLHFHIGSQIPSTSLLSDGVAEAAQLYCELVRLGAHMKVIDIGGGLGIDYDGSKSGESDLSVAYSLEEYAEAVVASVRVVCDRSSVKHPVICSESGRAIVSHHSVLIFEAVSADKPMVHQATPGDIQFLLEGNEEARANYEDLYAAVMRGDHESCLLYVDQLKQRCVEGFKEGVLSIEQLASVDGLCEWVLKAIGASDPVHTYNINLSVFTSIPDLWGIDQLFPIVPIHKLDQRPGARGILSDLTCDSDGKINKFIGGESSLPLHELDKNGSGGRYFLGMFLGGAYEEALGGVHNLFGGPSVVRVSQSDGPHSFAVTRAVPGQSSADVLRAMQHEPELMFQTLKHRAEEMMHTKGGSEGENEEEEEDDEFNNVAASLDRSFHNMPYLATEQASPSNSLSAAISNLGFYYCDEDVYDYISA.

K147 bears the N6-(pyridoxal phosphate)lysine mark. Residue 331-341 (IDIGGGLGIDY) coordinates substrate. Residues 642–661 (MHTKGGSEGENEEEEEDDEF) are disordered. Over residues 650 to 661 (GENEEEEEDDEF) the composition is skewed to acidic residues.

The protein belongs to the Orn/Lys/Arg decarboxylase class-II family. SpeA subfamily. As to quaternary structure, homodimer and heterodimer with ADC1. Pyridoxal 5'-phosphate is required as a cofactor. Mg(2+) serves as cofactor.

It localises to the plastid. Its subcellular location is the chloroplast. It is found in the cytoplasm. The protein resides in the cytosol. The enzyme catalyses L-arginine + H(+) = agmatine + CO2. It participates in amine and polyamine biosynthesis; agmatine biosynthesis; agmatine from L-arginine: step 1/1. In terms of biological role, required for the biosynthesis of putrescine. Catalyzes the first step of polyamine (PA) biosynthesis to produce putrescine from arginine. Is a major contributor to basal arginine decarboxylase (ADC) activity and putrescine biosynthesis. Accumulation of putrescine plays a positive role in salt stress tolerance. Accumulation of putrescine plays a positive role in freezing tolerance. Production of PA is essential for normal seed development. Controls PA homeostasis which is crucial for normal plant growth and development. The chain is Arginine decarboxylase 2 from Arabidopsis thaliana (Mouse-ear cress).